The following is a 132-amino-acid chain: MAYSKGVSGTLSDYTHLRTLPALLSVVFVIAGLYQFGGISDVTITWLSNYTLTSTHAMGASIGAYALAFASSETKQFDNYQDFEKVLIAAGPAVILGYEYIQPVTDLINTTSNAGPIAAFVVTVVAWGVAVR.

The protein localises to the virion membrane. Functionally, envelope protein that may play a role in host-cell attachment and viral genome entry. This Halorubrum pleomorphic virus 1 (HRPV-1) protein is Matrix protein.